The primary structure comprises 112 residues: Ferredoxin-2 (112 aa).

4Fe-4S ferredoxin-type domains lie at 2–30 and 31–60; these read TYVV…YEGE and NTLV…PDTE. Residues C9 and C17 each contribute to the [3Fe-4S] cluster site. Positions 21, 40, 43, and 46 each coordinate [4Fe-4S] cluster. Residue C50 participates in [3Fe-4S] cluster binding. The span at 85–103 shows a compositional bias: basic and acidic residues; that stretch reads DPMPDHKKYDGETGKREKY. A disordered region spans residues 85–112; sequence DPMPDHKKYDGETGKREKYFSPNPGTGD.

[4Fe-4S] cluster is required as a cofactor. Requires [3Fe-4S] cluster as cofactor.

Functionally, ferredoxins are iron-sulfur proteins that transfer electrons in a wide variety of metabolic reactions. This is Ferredoxin-2 (fdxA) from Rhodobacter capsulatus (strain ATCC BAA-309 / NBRC 16581 / SB1003).